A 148-amino-acid polypeptide reads, in one-letter code: MLYILIIILLIGLDQLSKIWVLNNLVDVSTIPIINNVFHLTYVENRGAAFGLLQNNQWIFIIVALLATVFGLYYLNTRKVHIFGRLGIILIISGALGNLIDRVRLGFVVDYFDFRIIWEYVFNIADVFVVVGTVFLCIYVLFFESKSR.

2 consecutive transmembrane segments (helical) span residues glutamine 57 to threonine 77 and valine 80 to isoleucine 100. Active-site residues include aspartate 110 and aspartate 126. A helical transmembrane segment spans residues isoleucine 124–glutamate 144.

The protein belongs to the peptidase A8 family.

Its subcellular location is the cell membrane. The catalysed reaction is Release of signal peptides from bacterial membrane prolipoproteins. Hydrolyzes -Xaa-Yaa-Zaa-|-(S,diacylglyceryl)Cys-, in which Xaa is hydrophobic (preferably Leu), and Yaa (Ala or Ser) and Zaa (Gly or Ala) have small, neutral side chains.. It participates in protein modification; lipoprotein biosynthesis (signal peptide cleavage). In terms of biological role, this protein specifically catalyzes the removal of signal peptides from prolipoproteins. This chain is Lipoprotein signal peptidase, found in Clostridioides difficile (strain 630) (Peptoclostridium difficile).